The following is a 346-amino-acid chain: Ferredoxin--NADP reductase 1 (346 aa).

Residues Glu37, Lys45, Tyr49, Ile89, Pro124, Asp287, and Ser328 each contribute to the FAD site.

This sequence belongs to the ferredoxin--NADP reductase type 2 family. In terms of assembly, homodimer. FAD is required as a cofactor.

The enzyme catalyses 2 reduced [2Fe-2S]-[ferredoxin] + NADP(+) + H(+) = 2 oxidized [2Fe-2S]-[ferredoxin] + NADPH. In Bacillus pumilus (strain SAFR-032), this protein is Ferredoxin--NADP reductase 1.